The sequence spans 150 residues: Cytochrome c oxidase subunit 5A, mitochondrial (150 aa).

The N-terminal 41 residues, 1–41, are a transit peptide targeting the mitochondrion; the sequence is MLGTALRRCAVAAASRAGSRGLLHPTPVPGPTAAIQSIRCY. The SIFI-degron signature appears at 2-17; the sequence is LGTALRRCAVAAASRA. 2 positions are modified to N6-acetyllysine: Lys-87 and Lys-113. Phosphothreonine is present on Thr-141.

This sequence belongs to the cytochrome c oxidase subunit 5A family. Component of the cytochrome c oxidase (complex IV, CIV), a multisubunit enzyme composed of 14 subunits. The complex is composed of a catalytic core of 3 subunits MT-CO1, MT-CO2 and MT-CO3, encoded in the mitochondrial DNA, and 11 supernumerary subunits COX4I, COX5A, COX5B, COX6A, COX6B, COX6C, COX7A, COX7B, COX7C, COX8 and NDUFA4, which are encoded in the nuclear genome. The complex exists as a monomer or a dimer and forms supercomplexes (SCs) in the inner mitochondrial membrane with NADH-ubiquinone oxidoreductase (complex I, CI) and ubiquinol-cytochrome c oxidoreductase (cytochrome b-c1 complex, complex III, CIII), resulting in different assemblies (supercomplex SCI(1)III(2)IV(1) and megacomplex MCI(2)III(2)IV(2)). Interacts with AFG1L. Interacts with RAB5IF. In terms of processing, in response to mitochondrial stress, the precursor protein is ubiquitinated by the SIFI complex in the cytoplasm before mitochondrial import, leading to its degradation. Within the SIFI complex, UBR4 initiates ubiquitin chain that are further elongated or branched by KCMF1.

Its subcellular location is the mitochondrion inner membrane. It participates in energy metabolism; oxidative phosphorylation. Component of the cytochrome c oxidase, the last enzyme in the mitochondrial electron transport chain which drives oxidative phosphorylation. The respiratory chain contains 3 multisubunit complexes succinate dehydrogenase (complex II, CII), ubiquinol-cytochrome c oxidoreductase (cytochrome b-c1 complex, complex III, CIII) and cytochrome c oxidase (complex IV, CIV), that cooperate to transfer electrons derived from NADH and succinate to molecular oxygen, creating an electrochemical gradient over the inner membrane that drives transmembrane transport and the ATP synthase. Cytochrome c oxidase is the component of the respiratory chain that catalyzes the reduction of oxygen to water. Electrons originating from reduced cytochrome c in the intermembrane space (IMS) are transferred via the dinuclear copper A center (CU(A)) of subunit 2 and heme A of subunit 1 to the active site in subunit 1, a binuclear center (BNC) formed by heme A3 and copper B (CU(B)). The BNC reduces molecular oxygen to 2 water molecules using 4 electrons from cytochrome c in the IMS and 4 protons from the mitochondrial matrix. This Otolemur crassicaudatus (Brown greater galago) protein is Cytochrome c oxidase subunit 5A, mitochondrial (COX5A).